A 654-amino-acid chain; its full sequence is Probable potassium transport system protein Kup (654 aa).

A run of 13 helical transmembrane segments spans residues 17–37 (GILV…LYVM), 40–60 (IIGL…AIFW), 71–91 (VLIT…LYAL), 99–119 (WLII…IITP), 137–157 (INTV…QQFG), 164–184 (FFAP…ILQI), 202–222 (LLSI…CTTG), 240–260 (ISWI…GAYL), 281–301 (LVMP…AAVI), 338–358 (IYIP…VLHF), 369–389 (GLAI…FMIL), 394–414 (WFII…FLIA), and 423–443 (GYVT…WYTA).

Belongs to the HAK/KUP transporter (TC 2.A.72) family.

It localises to the cell inner membrane. The catalysed reaction is K(+)(in) + H(+)(in) = K(+)(out) + H(+)(out). Transport of potassium into the cell. Likely operates as a K(+):H(+) symporter. This chain is Probable potassium transport system protein Kup, found in Flavobacterium psychrophilum (strain ATCC 49511 / DSM 21280 / CIP 103535 / JIP02/86).